The chain runs to 181 residues: Peptidyl-tRNA hydrolase (181 aa).

Tyr-14 serves as a coordination point for tRNA. Catalysis depends on His-19, which acts as the Proton acceptor. The tRNA site is built by Tyr-62, Asn-64, and Asn-108.

Belongs to the PTH family. As to quaternary structure, monomer.

The protein resides in the cytoplasm. It catalyses the reaction an N-acyl-L-alpha-aminoacyl-tRNA + H2O = an N-acyl-L-amino acid + a tRNA + H(+). Its function is as follows. Hydrolyzes ribosome-free peptidyl-tRNAs (with 1 or more amino acids incorporated), which drop off the ribosome during protein synthesis, or as a result of ribosome stalling. Functionally, catalyzes the release of premature peptidyl moieties from peptidyl-tRNA molecules trapped in stalled 50S ribosomal subunits, and thus maintains levels of free tRNAs and 50S ribosomes. This Campylobacter jejuni subsp. jejuni serotype O:23/36 (strain 81-176) protein is Peptidyl-tRNA hydrolase.